Reading from the N-terminus, the 714-residue chain is Fatty acid oxidation complex subunit alpha (714 aa).

Residues 1–190 (MEMASAFTLN…KLGLVDDVVP (190 aa)) form an enoyl-CoA hydratase region. Positions 306–714 (APLNSVGILG…FWKTTATDLQ (409 aa)) are 3-hydroxyacyl-CoA dehydrogenase.

This sequence in the N-terminal section; belongs to the enoyl-CoA hydratase/isomerase family. The protein in the central section; belongs to the 3-hydroxyacyl-CoA dehydrogenase family. Heterotetramer of two alpha chains (FadJ) and two beta chains (FadI).

Its subcellular location is the cytoplasm. The catalysed reaction is a (3S)-3-hydroxyacyl-CoA = a (2E)-enoyl-CoA + H2O. The enzyme catalyses a 4-saturated-(3S)-3-hydroxyacyl-CoA = a (3E)-enoyl-CoA + H2O. It carries out the reaction a (3S)-3-hydroxyacyl-CoA + NAD(+) = a 3-oxoacyl-CoA + NADH + H(+). It catalyses the reaction (3S)-3-hydroxybutanoyl-CoA = (3R)-3-hydroxybutanoyl-CoA. It functions in the pathway lipid metabolism; fatty acid beta-oxidation. Functionally, catalyzes the formation of a hydroxyacyl-CoA by addition of water on enoyl-CoA. Also exhibits 3-hydroxyacyl-CoA epimerase and 3-hydroxyacyl-CoA dehydrogenase activities. The protein is Fatty acid oxidation complex subunit alpha of Escherichia coli (strain ATCC 8739 / DSM 1576 / NBRC 3972 / NCIMB 8545 / WDCM 00012 / Crooks).